The sequence spans 639 residues: Threonine--tRNA ligase (639 aa).

Positions 1–61 (MIRITLPDNS…DHDARLQIIT (61 aa)) constitute a TGS domain. A catalytic region spans residues 242–533 (DHRRLGRELD…LIEQHAGALP (292 aa)). Zn(2+) is bound by residues C333, H384, and H510.

The protein belongs to the class-II aminoacyl-tRNA synthetase family. As to quaternary structure, homodimer. Zn(2+) serves as cofactor.

It is found in the cytoplasm. It catalyses the reaction tRNA(Thr) + L-threonine + ATP = L-threonyl-tRNA(Thr) + AMP + diphosphate + H(+). Its function is as follows. Catalyzes the attachment of threonine to tRNA(Thr) in a two-step reaction: L-threonine is first activated by ATP to form Thr-AMP and then transferred to the acceptor end of tRNA(Thr). Also edits incorrectly charged L-seryl-tRNA(Thr). This is Threonine--tRNA ligase from Paracidovorax citrulli (strain AAC00-1) (Acidovorax citrulli).